A 321-amino-acid chain; its full sequence is Glucokinase (321 aa).

Residue 8 to 13 coordinates ATP; sequence GDVGGT.

Belongs to the bacterial glucokinase family.

Its subcellular location is the cytoplasm. It carries out the reaction D-glucose + ATP = D-glucose 6-phosphate + ADP + H(+). In Enterobacter sp. (strain 638), this protein is Glucokinase.